A 461-amino-acid chain; its full sequence is MSKPLKVLCLHGWIQSGPVFSKKMGSVQKYLSKYAELHFPTGPVVADEEADPNDEEEKKRLAALGGEQNGGKFGWFEVEDFKNTYGSWDESLECINQYMQEKGPFDGLIGFSQGAGIGAMLAQMLQPGQPPNPYVQHPPFKFVVFVGGFRAEKPEFDHFYNPKLTTPSLHIAGTSDTLVPLARSKQLVERCENAHVLLHPGQHIVPQQAVYKTGIRDFMFSAPTKEPTKHPRDLTMIVAVSSPNLGIGKKNSMPWHIKQEMAYFANVTSSTESSGQLEEGKSKIMNVVIMGRSCYDSLPKKNRPLKDRINIVITRNSNYNFGLTKKEKMPENLYAADCIDSALDLVAEKYGADSDIQVGKVFIIGGSFLYGSALYHPLTKNLLFTRIHKEYPCDSFFPFEPAESSDWVRKAHPELEKFVGIPVEEGRLKAASSNKEEVEIEFELYGKNDDVNVALEKLSIC.

Positions 233-447 (DLTMIVAVSS…VEIEFELYGK (215 aa)) constitute a DHFR domain. Residues alanine 239 and 246 to 252 (GIGKKNS) contribute to the NADP(+) site. Residue 260–265 (EMAYFA) coordinates substrate. 292–294 (RSC) contributes to the NADP(+) binding site. Arginine 308 serves as a coordination point for substrate. NADP(+) contacts are provided by residues 314-316 (TRN) and 365-372 (GGSFLYGS).

The protein belongs to the dihydrofolate reductase family.

It carries out the reaction (6S)-5,6,7,8-tetrahydrofolate + NADP(+) = 7,8-dihydrofolate + NADPH + H(+). The protein operates within cofactor biosynthesis; tetrahydrofolate biosynthesis; 5,6,7,8-tetrahydrofolate from 7,8-dihydrofolate: step 1/1. Its function is as follows. Key enzyme in folate metabolism. Catalyzes an essential reaction for de novo glycine and purine synthesis, and for DNA precursor synthesis. The chain is Dihydrofolate reductase (dfr1) from Schizosaccharomyces pombe (strain 972 / ATCC 24843) (Fission yeast).